The following is a 294-amino-acid chain: Probable 2-(5''-triphosphoribosyl)-3'-dephosphocoenzyme-A synthase (294 aa).

Belongs to the CitG/MdcB family.

The enzyme catalyses 3'-dephospho-CoA + ATP = 2'-(5''-triphospho-alpha-D-ribosyl)-3'-dephospho-CoA + adenine. This chain is Probable 2-(5''-triphosphoribosyl)-3'-dephosphocoenzyme-A synthase, found in Streptococcus equi subsp. zooepidemicus (strain MGCS10565).